Consider the following 302-residue polypeptide: Ribosomal RNA small subunit methyltransferase H (302 aa).

S-adenosyl-L-methionine-binding positions include 43–45 (GGH), Asp62, Phe89, Asp105, and His112. Residues 276–302 (EIANNPRSRSAKLRIAEKQAETGDEDN) form a disordered region.

Belongs to the methyltransferase superfamily. RsmH family.

It localises to the cytoplasm. It catalyses the reaction cytidine(1402) in 16S rRNA + S-adenosyl-L-methionine = N(4)-methylcytidine(1402) in 16S rRNA + S-adenosyl-L-homocysteine + H(+). In terms of biological role, specifically methylates the N4 position of cytidine in position 1402 (C1402) of 16S rRNA. This Nostoc sp. (strain PCC 7120 / SAG 25.82 / UTEX 2576) protein is Ribosomal RNA small subunit methyltransferase H.